The primary structure comprises 380 residues: Cobalt-precorrin-5B C(1)-methyltransferase (380 aa).

The protein belongs to the CbiD family.

The enzyme catalyses Co-precorrin-5B + S-adenosyl-L-methionine = Co-precorrin-6A + S-adenosyl-L-homocysteine. It participates in cofactor biosynthesis; adenosylcobalamin biosynthesis; cob(II)yrinate a,c-diamide from sirohydrochlorin (anaerobic route): step 6/10. Its function is as follows. Catalyzes the methylation of C-1 in cobalt-precorrin-5B to form cobalt-precorrin-6A. This chain is Cobalt-precorrin-5B C(1)-methyltransferase, found in Salinispora tropica (strain ATCC BAA-916 / DSM 44818 / JCM 13857 / NBRC 105044 / CNB-440).